The following is a 327-amino-acid chain: Cytochrome P450 2C42 (327 aa).

A heme-binding site is contributed by cysteine 272.

Belongs to the cytochrome P450 family. Heme is required as a cofactor.

Its subcellular location is the endoplasmic reticulum membrane. The protein localises to the microsome membrane. The catalysed reaction is an organic molecule + reduced [NADPH--hemoprotein reductase] + O2 = an alcohol + oxidized [NADPH--hemoprotein reductase] + H2O + H(+). Cytochromes P450 are a group of heme-thiolate monooxygenases. In liver microsomes, this enzyme is involved in an NADPH-dependent electron transport pathway. It oxidizes a variety of structurally unrelated compounds, including steroids, fatty acids, and xenobiotics. The sequence is that of Cytochrome P450 2C42 (CYP2C42) from Sus scrofa (Pig).